The primary structure comprises 537 residues: Biotin carboxylase, chloroplastic (537 aa).

Residues 1–71 constitute a chloroplast transit peptide; the sequence is MDASMITNSK…ATSGGLGVTC (71 aa). ATP-binding positions include Lys-188, Lys-230, 236–237, 272–275, and His-280; these read GG and EKFV. An ATP-grasp domain is found at 192–389; sequence RETMKNAGVP…LIEEQIRVAM (198 aa). Residue Lys-309 participates in hydrogencarbonate binding. 2 residues coordinate ATP: Glu-347 and Glu-360. Mg(2+) is bound by residues Glu-347, Glu-360, and Asn-362. Mn(2+) contacts are provided by Glu-347, Glu-360, and Asn-362. Residues Arg-364, Val-367, and Arg-410 each contribute to the hydrogencarbonate site. The active site involves Arg-364. Arg-410 is a binding site for biotin.

As to quaternary structure, acetyl-CoA carboxylase is a heterohexamer composed of biotin carboxyl carrier protein, biotin carboxylase and two subunits each of ACCase subunit alpha and ACCase plastid-coded subunit beta (accD). Requires Mg(2+) as cofactor. It depends on Mn(2+) as a cofactor. Accumulates in fatty acids synthesizing tissues. Mostly expressed in siliques, developing leaves, and flowers, present in roots and embryos (especially at torpedo stage), and, to a lower extent, in mature leaves.

Its subcellular location is the plastid. It is found in the chloroplast. It carries out the reaction N(6)-biotinyl-L-lysyl-[protein] + hydrogencarbonate + ATP = N(6)-carboxybiotinyl-L-lysyl-[protein] + ADP + phosphate + H(+). Its pathway is lipid metabolism; malonyl-CoA biosynthesis; malonyl-CoA from acetyl-CoA: step 1/1. Its function is as follows. This protein is a component of the acetyl coenzyme A carboxylase complex; first, biotin carboxylase catalyzes the carboxylation of the carrier protein and then the transcarboxylase transfers the carboxyl group to form malonyl-CoA. This chain is Biotin carboxylase, chloroplastic (CAC2), found in Arabidopsis thaliana (Mouse-ear cress).